A 313-amino-acid polypeptide reads, in one-letter code: ADP-L-glycero-D-manno-heptose-6-epimerase (313 aa).

NADP(+) is bound by residues 10 to 11, 31 to 32, K38, R53, 75 to 79, and N92; these read MI, DN, and EGACS. The active-site Proton acceptor is the Y139. K143 provides a ligand contact to NADP(+). Residue N174 participates in substrate binding. Residues V175 and K183 each contribute to the NADP(+) site. K183 serves as the catalytic Proton acceptor. Substrate-binding positions include S185, H192, 206–209, R214, and Y277; that span reads FAGS.

The protein belongs to the NAD(P)-dependent epimerase/dehydratase family. HldD subfamily. Homopentamer. NADP(+) serves as cofactor.

The catalysed reaction is ADP-D-glycero-beta-D-manno-heptose = ADP-L-glycero-beta-D-manno-heptose. It functions in the pathway nucleotide-sugar biosynthesis; ADP-L-glycero-beta-D-manno-heptose biosynthesis; ADP-L-glycero-beta-D-manno-heptose from D-glycero-beta-D-manno-heptose 7-phosphate: step 4/4. Functionally, catalyzes the interconversion between ADP-D-glycero-beta-D-manno-heptose and ADP-L-glycero-beta-D-manno-heptose via an epimerization at carbon 6 of the heptose. The protein is ADP-L-glycero-D-manno-heptose-6-epimerase of Vibrio campbellii (strain ATCC BAA-1116).